A 159-amino-acid chain; its full sequence is Trafficking protein particle complex subunit 6A (159 aa).

S33 carries the phosphoserine modification.

This sequence belongs to the TRAPP small subunits family. BET3 subfamily. As to quaternary structure, part of the multisubunit transport protein particle (TRAPP) complex. Heterodimer with TRAPPC3. The heterodimer TRAPPC3-TRAPPC6A interacts with TRAPPC2L. Interacts with TRAPPC2L. As to expression, ubiquitous, with lowest expression in skeletal muscle and brain and highest in kidney, liver and testis, as well as in cultured melanocytes.

Its subcellular location is the golgi apparatus. It is found in the cis-Golgi network. The protein resides in the endoplasmic reticulum. Its function is as follows. May play a role in vesicular transport during the biogenesis of melanosomes. This Mus musculus (Mouse) protein is Trafficking protein particle complex subunit 6A.